A 399-amino-acid chain; its full sequence is Phosphoglycerate kinase (399 aa).

Residues 22–24, Arg-38, 61–64, Arg-120, and Arg-153 contribute to the substrate site; these read DFN and HLGR. Residues Lys-204, Glu-326, and 353–356 each bind ATP; that span reads GGDT.

It belongs to the phosphoglycerate kinase family. As to quaternary structure, monomer.

The protein resides in the cytoplasm. The enzyme catalyses (2R)-3-phosphoglycerate + ATP = (2R)-3-phospho-glyceroyl phosphate + ADP. It participates in carbohydrate degradation; glycolysis; pyruvate from D-glyceraldehyde 3-phosphate: step 2/5. This Geotalea daltonii (strain DSM 22248 / JCM 15807 / FRC-32) (Geobacter daltonii) protein is Phosphoglycerate kinase.